The chain runs to 149 residues: Transcriptional repressor NrdR (149 aa).

A zinc finger lies at 3 to 34; it reads CPFCAAVDTKVIDSRLVGDGSQVRRRRQCLVC. Positions 49 to 139 constitute an ATP-cone domain; the sequence is PRVIKSDEVR…VYRSFEDIRE (91 aa).

Belongs to the NrdR family. The cofactor is Zn(2+).

Its function is as follows. Negatively regulates transcription of bacterial ribonucleotide reductase nrd genes and operons by binding to NrdR-boxes. This chain is Transcriptional repressor NrdR, found in Serratia proteamaculans (strain 568).